Reading from the N-terminus, the 523-residue chain is UDP-N-acetylmuramyl-tripeptide synthetase (523 aa).

S38 contacts UDP-N-acetyl-alpha-D-muramoyl-L-alanyl-D-glutamate. Residue 116–122 (GTKGKTT) participates in ATP binding. Residues 162–163 (TT), S189, and R197 each bind UDP-N-acetyl-alpha-D-muramoyl-L-alanyl-D-glutamate. An N6-carboxylysine modification is found at K231.

Belongs to the MurCDEF family. MurE subfamily. Carboxylation is probably crucial for Mg(2+) binding and, consequently, for the gamma-phosphate positioning of ATP.

It is found in the cytoplasm. Its pathway is cell wall biogenesis; peptidoglycan biosynthesis. Catalyzes the addition of an amino acid to the nucleotide precursor UDP-N-acetylmuramoyl-L-alanyl-D-glutamate (UMAG) in the biosynthesis of bacterial cell-wall peptidoglycan. The protein is UDP-N-acetylmuramyl-tripeptide synthetase of Lactobacillus acidophilus (strain ATCC 700396 / NCK56 / N2 / NCFM).